The following is a 213-amino-acid chain: Small ribosomal subunit protein eS1 (213 aa).

Belongs to the eukaryotic ribosomal protein eS1 family.

This Desulfurococcus amylolyticus (strain DSM 18924 / JCM 16383 / VKM B-2413 / 1221n) (Desulfurococcus kamchatkensis) protein is Small ribosomal subunit protein eS1.